The primary structure comprises 397 residues: Probable tRNA sulfurtransferase (397 aa).

Positions 60–165 constitute a THUMP domain; it reads HPVIEKLQEV…KEGTYITAYD (106 aa). ATP is bound by residues 183 to 184, 208 to 209, Arg265, Gly287, and Gln296; these read ML and HF.

Belongs to the ThiI family.

The protein localises to the cytoplasm. It carries out the reaction [ThiI sulfur-carrier protein]-S-sulfanyl-L-cysteine + a uridine in tRNA + 2 reduced [2Fe-2S]-[ferredoxin] + ATP + H(+) = [ThiI sulfur-carrier protein]-L-cysteine + a 4-thiouridine in tRNA + 2 oxidized [2Fe-2S]-[ferredoxin] + AMP + diphosphate. The enzyme catalyses [ThiS sulfur-carrier protein]-C-terminal Gly-Gly-AMP + S-sulfanyl-L-cysteinyl-[cysteine desulfurase] + AH2 = [ThiS sulfur-carrier protein]-C-terminal-Gly-aminoethanethioate + L-cysteinyl-[cysteine desulfurase] + A + AMP + 2 H(+). The protein operates within cofactor biosynthesis; thiamine diphosphate biosynthesis. In terms of biological role, catalyzes the ATP-dependent transfer of a sulfur to tRNA to produce 4-thiouridine in position 8 of tRNAs, which functions as a near-UV photosensor. Also catalyzes the transfer of sulfur to the sulfur carrier protein ThiS, forming ThiS-thiocarboxylate. This is a step in the synthesis of thiazole, in the thiamine biosynthesis pathway. The sulfur is donated as persulfide by IscS. In Anoxybacillus flavithermus (strain DSM 21510 / WK1), this protein is Probable tRNA sulfurtransferase.